Reading from the N-terminus, the 102-residue chain is Small ribosomal subunit protein uS10 (102 aa).

Belongs to the universal ribosomal protein uS10 family. In terms of assembly, part of the 30S ribosomal subunit.

Its function is as follows. Involved in the binding of tRNA to the ribosomes. In Streptococcus pneumoniae (strain Taiwan19F-14), this protein is Small ribosomal subunit protein uS10.